A 223-amino-acid polypeptide reads, in one-letter code: Killer cell lectin-like receptor subfamily B member 1A (223 aa).

Over 1–43 (MDTARVYLSLKPSKTAAGAQCVSPPSLPPDACRCPRSHRLALK) the chain is Cytoplasmic. An LCK-binding motif motif is present at residues 32–35 (CRCP). Residues 44 to 63 (LSCAGLILLVLALVGMSILV) form a helical; Signal-anchor for type II membrane protein membrane-spanning segment. Residues 64 to 223 (RVLVQKPSVE…LKCECMCNDS (160 aa)) lie on the Extracellular side of the membrane. Positions 93-212 (KCPKDWLSHR…DSDNIWVCQK (120 aa)) constitute a C-type lectin domain. Cystine bridges form between cysteine 94/cysteine 105, cysteine 122/cysteine 210, and cysteine 189/cysteine 202.

In terms of assembly, homodimer; disulfide-linked. Interacts with tyrosine kinase LCK. As to expression, expressed in natural killer cells.

The protein resides in the membrane. Functionally, plays a stimulatory role on natural killer (NK) cell cytotoxicity. This is Killer cell lectin-like receptor subfamily B member 1A (Klrb1a) from Rattus norvegicus (Rat).